Consider the following 118-residue polypeptide: Large ribosomal subunit protein bL20 (118 aa).

It belongs to the bacterial ribosomal protein bL20 family.

In terms of biological role, binds directly to 23S ribosomal RNA and is necessary for the in vitro assembly process of the 50S ribosomal subunit. It is not involved in the protein synthesizing functions of that subunit. This Klebsiella pneumoniae (strain 342) protein is Large ribosomal subunit protein bL20.